The following is a 435-amino-acid chain: Histidinol dehydrogenase (435 aa).

NAD(+) contacts are provided by Tyr-131, Gln-189, and Asn-212. Residues Ser-238, Gln-260, and His-263 each contribute to the substrate site. Positions 260 and 263 each coordinate Zn(2+). Residues Glu-327 and His-328 each act as proton acceptor in the active site. Residues His-328, Asp-361, Glu-415, and His-420 each coordinate substrate. A Zn(2+)-binding site is contributed by Asp-361. His-420 is a binding site for Zn(2+).

This sequence belongs to the histidinol dehydrogenase family. Homodimer. It depends on Zn(2+) as a cofactor.

The catalysed reaction is L-histidinol + 2 NAD(+) + H2O = L-histidine + 2 NADH + 3 H(+). The protein operates within amino-acid biosynthesis; L-histidine biosynthesis; L-histidine from 5-phospho-alpha-D-ribose 1-diphosphate: step 9/9. Functionally, catalyzes the sequential NAD-dependent oxidations of L-histidinol to L-histidinaldehyde and then to L-histidine. The sequence is that of Histidinol dehydrogenase (hisD) from Buchnera aphidicola subsp. Schizaphis graminum (strain Sg).